We begin with the raw amino-acid sequence, 278 residues long: Asnovolin E/Chermesin D methyltransferase nvfJ (278 aa).

Residues 125–126, 152–153, and 153–154 contribute to the S-adenosyl-L-methionine site; these read DL, NI, and IL.

Belongs to the class I-like SAM-binding methyltransferase superfamily. As to quaternary structure, homodimer.

The catalysed reaction is chermesin D + S-adenosyl-L-methionine = chermesin D methyl ester + S-adenosyl-L-homocysteine. It carries out the reaction asnovolin I + S-adenosyl-L-methionine = asnovolin K + S-adenosyl-L-homocysteine. Its pathway is secondary metabolite biosynthesis; terpenoid biosynthesis. Functionally, methyltransferase; part of the gene cluster that mediates the biosynthesis of novofumigatonin, a heavily oxygenated meroterpenoid containing a unique orthoester moiety. The first step of the pathway is the synthesis of 3,5-dimethylorsellinic acid (DMOA) by the polyketide synthase nvfA via condensation of one acetyl-CoA starter unit with 3 malonyl-CoA units and 2 methylations. DMOA is then converted to farnesyl-DMOA by the farnesyltransferase nvfB. Epoxydation by FAD-dependent monooxygenase nvfK, followed by a protonation-initiated cyclization catalyzed by the terpene cyclase nvfL leads to the production of asnavolin H. The short chain dehydrogenase nvfC then as a 3-OH dehydrogenase of asnovolin H to yield chemesin D. There are two branches to synthesize asnovolin A from chemesin D. In one branch, chemesin D undergoes Baeyer-Villiger oxidation by nvfH, methylation by nvfJ, and enoyl reduction by the nvfM D enoylreductase that reduces the double bond between C-5'and C-6', to form respectively asnovolin I, asnovolin K, and asnovolin A. In the other branch, the methylation precedes the Baeyer-Villiger oxidation and the enoyl reduction to yield asnovolin A via the asnovolin J intermediate. Asnovolin A is further converted to fumigatonoid A by the Fe(II)/2-oxoglutarate-dependent dioxygenase nvfI that catalyzes an endoperoxidation reaction. The alpha/beta hydrolase nvfD then acts as an epimerase that converts fumigatonoid A to its C-5' epimer, which then undergoes spontaneous or nvfD-catalyzed lactonization. The following step utilizes the ketoreductase nvfG to produce fumigatonoid B. The dioxygenase nvfE further converts fumigatonoid B into fumigatonoid C. Finally the Fe(II)/2-oxoglutarate-dependent dioxygenase nvfF catalyzes two rounds of oxidation to transform fumigatonoid C into the end product, novofumigatonin A. The protein is Asnovolin E/Chermesin D methyltransferase nvfJ of Aspergillus novofumigatus (strain IBT 16806).